The chain runs to 595 residues: Adenine deaminase 2 (595 aa).

This sequence belongs to the metallo-dependent hydrolases superfamily. Adenine deaminase family. Mn(2+) serves as cofactor.

The enzyme catalyses adenine + H2O + H(+) = hypoxanthine + NH4(+). This chain is Adenine deaminase 2, found in Rhizobium etli (strain ATCC 51251 / DSM 11541 / JCM 21823 / NBRC 15573 / CFN 42).